The primary structure comprises 241 residues: MTTLLISDLHLDEERPDIARAFLRFLKERASQAEALYILGDFFEAWIGDDAMTSFQRDIAAALREVAERGTRVFLMHGNRDFLVGHSFCRQAGCTLLRDPSRVILNGAPVLLMHGDTLCTRDIAYMRFRRRLRNPVSVWLLRHLPLSKRRQLARKWRDASRMQVRRKATEIVDVTPEEVPRIMAAHGVLTLIHGHTHRPAVHELQVDGRQARRIVLGDWNRQGWVLQVDGSGYHLTPFPID.

Residues D8, H10, D41, N79, and H114 each coordinate Mn(2+). 79-80 (NR) is a binding site for substrate. Substrate-binding residues include D122, S160, K167, and H195. Mn(2+) contacts are provided by H195 and H197.

The protein belongs to the LpxH family. Mn(2+) is required as a cofactor.

It is found in the cell inner membrane. The enzyme catalyses UDP-2-N,3-O-bis[(3R)-3-hydroxytetradecanoyl]-alpha-D-glucosamine + H2O = 2-N,3-O-bis[(3R)-3-hydroxytetradecanoyl]-alpha-D-glucosaminyl 1-phosphate + UMP + 2 H(+). It functions in the pathway glycolipid biosynthesis; lipid IV(A) biosynthesis; lipid IV(A) from (3R)-3-hydroxytetradecanoyl-[acyl-carrier-protein] and UDP-N-acetyl-alpha-D-glucosamine: step 4/6. Hydrolyzes the pyrophosphate bond of UDP-2,3-diacylglucosamine to yield 2,3-diacylglucosamine 1-phosphate (lipid X) and UMP by catalyzing the attack of water at the alpha-P atom. Involved in the biosynthesis of lipid A, a phosphorylated glycolipid that anchors the lipopolysaccharide to the outer membrane of the cell. This Azotobacter vinelandii (strain DJ / ATCC BAA-1303) protein is UDP-2,3-diacylglucosamine hydrolase.